The following is a 336-amino-acid chain: uncharacterized protein (336 aa).

A signal peptide spans 1 to 21; sequence MSELVLITGITGFVASHSAEA. Lysine 38 contributes to the NADP(+) binding site. Threonine 153 carries the phosphothreonine modification. Tyrosine 167 contacts NADP(+).

The protein belongs to the NAD(P)-dependent epimerase/dehydratase family. Dihydroflavonol-4-reductase subfamily.

This is an uncharacterized protein from Schizosaccharomyces pombe (strain 972 / ATCC 24843) (Fission yeast).